The sequence spans 91 residues: Uteroglobin (91 aa).

The first 21 residues, 1-21 (MKLAITLALVTLALLCSPASA), serve as a signal peptide directing secretion.

The protein belongs to the secretoglobin family. As to quaternary structure, antiparallel homodimer; disulfide-linked. Interaction with LMBR1L is controversial. In terms of tissue distribution, synthesized in the uterus and lung.

It localises to the secreted. In terms of biological role, uteroglobin binds progesterone specifically and with high affinity. It may regulate progesterone concentrations reaching the blastocyst. It is also a potent inhibitor of phospholipase A2. The sequence is that of Uteroglobin (SCGB1A1) from Oryctolagus cuniculus (Rabbit).